Consider the following 448-residue polypeptide: Putative F-box/LRR-repeat protein At3g44810 (448 aa).

Residues 6 to 54 (TASLNCLPDELLVHVLSSLETKQAASTSVLSKRWRTLFAVRRNLDFDDS) form the F-box domain. 6 LRR repeats span residues 117–141 (VSEL…VFRS), 143–165 (TLVK…TCLP), 190–213 (CPAL…VSSK), 228–251 (FDWF…TYAR), 290–313 (VRNV…CKGG), and 421–443 (IVDS…SSRL).

This is Putative F-box/LRR-repeat protein At3g44810 from Arabidopsis thaliana (Mouse-ear cress).